The sequence spans 90 residues: Small ribosomal subunit protein bS16 (90 aa).

It belongs to the bacterial ribosomal protein bS16 family.

The protein is Small ribosomal subunit protein bS16 of Lactiplantibacillus plantarum (strain ATCC BAA-793 / NCIMB 8826 / WCFS1) (Lactobacillus plantarum).